Reading from the N-terminus, the 888-residue chain is Translation initiation factor IF-2 (888 aa).

2 disordered regions span residues 96–122 (TTKQDESDAAGKRAAEDVSLRTAEAPE) and 158–302 (ELKE…SAPT). Composition is skewed to basic and acidic residues over residues 98–114 (KQDESDAAGKRAAEDVS) and 158–167 (ELKEKQEKRR). A compositionally biased stretch (polar residues) spans 181-206 (TQVQEPGSETAAVSGSVAATQPESTE). Positions 207 to 225 (TAAVTPSATITVTTQTTPA) are enriched in low complexity. Composition is skewed to basic and acidic residues over residues 226 to 243 (AKERAPQKPAVKPEEKGE) and 253 to 269 (EAWKDEPVKRRESKARG). The tr-type G domain occupies 390 to 559 (SRAPVVTVMG…LLQAEVLELK (170 aa)). Residues 399 to 406 (GHVDHGKT) form a G1 region. 399–406 (GHVDHGKT) provides a ligand contact to GTP. A G2 region spans residues 424-428 (GITQH). The tract at residues 445–448 (DTPG) is G3. Residues 445 to 449 (DTPGH) and 499 to 502 (NKMD) each bind GTP. The interval 499-502 (NKMD) is G4. The interval 535-537 (SAK) is G5.

This sequence belongs to the TRAFAC class translation factor GTPase superfamily. Classic translation factor GTPase family. IF-2 subfamily.

It localises to the cytoplasm. Its function is as follows. One of the essential components for the initiation of protein synthesis. Protects formylmethionyl-tRNA from spontaneous hydrolysis and promotes its binding to the 30S ribosomal subunits. Also involved in the hydrolysis of GTP during the formation of the 70S ribosomal complex. The protein is Translation initiation factor IF-2 of Nitrosomonas eutropha (strain DSM 101675 / C91 / Nm57).